We begin with the raw amino-acid sequence, 691 residues long: DNA ligase (691 aa).

Residues 53–57 (DSEYD), 102–103 (SL), and Glu-135 contribute to the NAD(+) site. The active-site N6-AMP-lysine intermediate is the Lys-137. Arg-158, Glu-195, Lys-310, and Lys-334 together coordinate NAD(+). Residues Cys-428, Cys-431, Cys-446, and Cys-452 each coordinate Zn(2+). Residues 613 to 691 (SEGLPLDGQT…EEEFLVLVGE (79 aa)) form the BRCT domain.

It belongs to the NAD-dependent DNA ligase family. LigA subfamily. Mg(2+) serves as cofactor. Requires Mn(2+) as cofactor.

It carries out the reaction NAD(+) + (deoxyribonucleotide)n-3'-hydroxyl + 5'-phospho-(deoxyribonucleotide)m = (deoxyribonucleotide)n+m + AMP + beta-nicotinamide D-nucleotide.. In terms of biological role, DNA ligase that catalyzes the formation of phosphodiester linkages between 5'-phosphoryl and 3'-hydroxyl groups in double-stranded DNA using NAD as a coenzyme and as the energy source for the reaction. It is essential for DNA replication and repair of damaged DNA. This is DNA ligase from Psychrobacter cryohalolentis (strain ATCC BAA-1226 / DSM 17306 / VKM B-2378 / K5).